Here is a 576-residue protein sequence, read N- to C-terminus: Septation ring formation regulator EzrA (576 aa).

Residues 1-7 (MSSTVII) are Extracellular-facing. Residues 8 to 26 (LIVVLLVILVAFYAFAILM) form a helical membrane-spanning segment. Over 27–576 (RKKTEDRILA…FKNKPTPDYL (550 aa)) the chain is Cytoplasmic. 3 coiled-coil regions span residues 105–134 (RARESVADSEAQIEMMEGDVEGIRQGVAQL), 254–305 (ENVN…FERE), and 356–402 (GYQE…IEKN).

Belongs to the EzrA family.

The protein resides in the cell membrane. In terms of biological role, negative regulator of FtsZ ring formation; modulates the frequency and position of FtsZ ring formation. Inhibits FtsZ ring formation at polar sites. Interacts either with FtsZ or with one of its binding partners to promote depolymerization. The sequence is that of Septation ring formation regulator EzrA from Lactococcus lactis subsp. cremoris (strain MG1363).